The sequence spans 191 residues: MANFSTNQFKAGLKIMLDGEPCNILENELVKPGKGQAFSRVKIRKLVSGKVLEKTFKSGETVEGADVMEVELAYLYADGEFWHFMNNETFEQIGAEEKALGETVKWLVEGDICTITLWNGTPITVTAANFVEIDITETDPGLKGDTAGTGGKPATLATGAVVRVPLFVQIGEKVRIDTRSGEYVSRATKAQ.

At Lys34 the chain carries N6-(3,6-diaminohexanoyl)-5-hydroxylysine.

This sequence belongs to the elongation factor P family. Post-translationally, may be beta-lysylated on the epsilon-amino group of Lys-34 by the combined action of EpmA and EpmB, and then hydroxylated on the C5 position of the same residue by EpmC (if this protein is present). Lysylation is critical for the stimulatory effect of EF-P on peptide-bond formation. The lysylation moiety may extend toward the peptidyltransferase center and stabilize the terminal 3-CCA end of the tRNA. Hydroxylation of the C5 position on Lys-34 may allow additional potential stabilizing hydrogen-bond interactions with the P-tRNA.

It localises to the cytoplasm. Its pathway is protein biosynthesis; polypeptide chain elongation. Functionally, involved in peptide bond synthesis. Alleviates ribosome stalling that occurs when 3 or more consecutive Pro residues or the sequence PPG is present in a protein, possibly by augmenting the peptidyl transferase activity of the ribosome. Modification of Lys-34 is required for alleviation. This Colwellia psychrerythraea (strain 34H / ATCC BAA-681) (Vibrio psychroerythus) protein is Elongation factor P.